We begin with the raw amino-acid sequence, 467 residues long: Asparagine--tRNA ligase (467 aa).

The protein belongs to the class-II aminoacyl-tRNA synthetase family. In terms of assembly, homodimer.

The protein localises to the cytoplasm. It carries out the reaction tRNA(Asn) + L-asparagine + ATP = L-asparaginyl-tRNA(Asn) + AMP + diphosphate + H(+). This is Asparagine--tRNA ligase from Protochlamydia amoebophila (strain UWE25).